The following is an 843-amino-acid chain: Molybdenum cofactor sulfurase (843 aa).

The residue at position 241 (lysine 241) is an N6-(pyridoxal phosphate)lysine. The active site involves cysteine 405. Residues 657–836 (QYLRKFVMPG…LMVGDIVIPS (180 aa)) enclose the MOSC domain.

The protein belongs to the class-V pyridoxal-phosphate-dependent aminotransferase family. MOCOS subfamily. Requires pyridoxal 5'-phosphate as cofactor.

It carries out the reaction Mo-molybdopterin + L-cysteine + AH2 = thio-Mo-molybdopterin + L-alanine + A + H2O. Sulfurates the molybdenum cofactor. Sulfation of molybdenum is essential for xanthine dehydrogenase (XDH) and aldehyde oxidase (ADO) enzymes in which molybdenum cofactor is liganded by 1 oxygen and 1 sulfur atom in active form. The protein is Molybdenum cofactor sulfurase of Aspergillus fumigatus (strain CBS 144.89 / FGSC A1163 / CEA10) (Neosartorya fumigata).